A 275-amino-acid polypeptide reads, in one-letter code: Elongation factor Ts (275 aa).

The interval 80-83 (TDFV) is involved in Mg(2+) ion dislocation from EF-Tu.

This sequence belongs to the EF-Ts family.

It is found in the cytoplasm. Its function is as follows. Associates with the EF-Tu.GDP complex and induces the exchange of GDP to GTP. It remains bound to the aminoacyl-tRNA.EF-Tu.GTP complex up to the GTP hydrolysis stage on the ribosome. The sequence is that of Elongation factor Ts from Clavibacter michiganensis subsp. michiganensis (strain NCPPB 382).